The primary structure comprises 440 residues: Phosphoglycerate kinase, glycosomal (440 aa).

Residues Val23, Asp24, Phe25, Asn26, Arg39, Ser61, His62, Gly64, Arg65, Arg135, His171, and Arg172 each contribute to the (2R)-3-phosphoglycerate site. Gly217 is a binding site for CDP. Ala218 serves as a coordination point for ADP. AMP contacts are provided by Ala218 and Lys219. An ATP-binding site is contributed by Ala218. Ala218 is a binding site for Mg(2+). Lys219 is a (2R)-3-phosphoglycerate binding site. A CDP-binding site is contributed by Asp222. Asp222 lines the Mg(2+) pocket. 2 residues coordinate ADP: Lys223 and Gly241. Lys223 lines the AMP pocket. A CDP-binding site is contributed by Gly241. Residues Ala242 and Ala314 each contribute to the AMP site. Residues Ala242 and Ala314 each coordinate ATP. Residues Ala314 and Asn338 each coordinate ADP. CDP is bound by residues Gly339 and Phe344. 4 residues coordinate ADP: Phe344, Glu345, Asp377, and Ser378. Glu345 serves as a coordination point for AMP. Residues Asp377 and Ser378 each coordinate ATP. Asp377 is a Mg(2+) binding site.

Belongs to the phosphoglycerate kinase family. Monomer. Mg(2+) is required as a cofactor.

Its subcellular location is the glycosome. The catalysed reaction is (2R)-3-phosphoglycerate + ATP = (2R)-3-phospho-glyceroyl phosphate + ADP. It functions in the pathway carbohydrate degradation; glycolysis; pyruvate from D-glyceraldehyde 3-phosphate: step 2/5. This Trypanosoma brucei brucei protein is Phosphoglycerate kinase, glycosomal.